Here is a 32-residue protein sequence, read N- to C-terminus: Photosystem II reaction center protein T (32 aa).

Residues 3 to 23 form a helical membrane-spanning segment; sequence ALVYTFLLIGTLMVIFFAVFF.

Belongs to the PsbT family. In terms of assembly, PSII is composed of 1 copy each of membrane proteins PsbA, PsbB, PsbC, PsbD, PsbE, PsbF, PsbH, PsbI, PsbJ, PsbK, PsbL, PsbM, PsbT, PsbX, PsbY, PsbZ, Psb30/Ycf12, at least 3 peripheral proteins of the oxygen-evolving complex and a large number of cofactors. It forms dimeric complexes.

It localises to the plastid. The protein resides in the chloroplast thylakoid membrane. In terms of biological role, found at the monomer-monomer interface of the photosystem II (PS II) dimer, plays a role in assembly and dimerization of PSII. PSII is a light-driven water plastoquinone oxidoreductase, using light energy to abstract electrons from H(2)O, generating a proton gradient subsequently used for ATP formation. The sequence is that of Photosystem II reaction center protein T from Thalassiosira pseudonana (Marine diatom).